Reading from the N-terminus, the 194-residue chain is dCTP deaminase, dUMP-forming (194 aa).

DCTP-binding positions include 104-109 (RSSLGR), aspartate 122, 130-132 (TLE), glutamine 151, tyrosine 165, lysine 172, and glutamine 176. Catalysis depends on glutamate 132, which acts as the Proton donor/acceptor.

The protein belongs to the dCTP deaminase family. Homotrimer.

The catalysed reaction is dCTP + 2 H2O = dUMP + NH4(+) + diphosphate. It functions in the pathway pyrimidine metabolism; dUMP biosynthesis; dUMP from dCTP: step 1/1. In terms of biological role, bifunctional enzyme that catalyzes both the deamination of dCTP to dUTP and the hydrolysis of dUTP to dUMP without releasing the toxic dUTP intermediate. The protein is dCTP deaminase, dUMP-forming of Dictyoglomus thermophilum (strain ATCC 35947 / DSM 3960 / H-6-12).